The chain runs to 442 residues: Probable alpha-galactosidase B (442 aa).

Positions 1-19 (MQRYISLSVSLSLLSGANA) are cleaved as a signal peptide. 2 cysteine pairs are disulfide-bonded: C42/C74 and C124/C154. D152 serves as the catalytic Nucleophile. N159, N173, N179, and N215 each carry an N-linked (GlcNAc...) asparagine glycan. Substrate is bound at residue 224–228 (EWGQA). N-linked (GlcNAc...) asparagine glycosylation occurs at N235. D246 serves as the catalytic Proton donor. N285 carries N-linked (GlcNAc...) asparagine glycosylation.

It belongs to the glycosyl hydrolase 27 family.

The protein localises to the secreted. The catalysed reaction is Hydrolysis of terminal, non-reducing alpha-D-galactose residues in alpha-D-galactosides, including galactose oligosaccharides, galactomannans and galactolipids.. Hydrolyzes a variety of simple alpha-D-galactoside as well as more complex molecules such as oligosaccharides and polysaccharides. This is Probable alpha-galactosidase B (aglB) from Aspergillus oryzae (strain ATCC 42149 / RIB 40) (Yellow koji mold).